A 253-amino-acid chain; its full sequence is Large ribosomal subunit protein uL4 (253 aa).

Belongs to the universal ribosomal protein uL4 family. Part of the 50S ribosomal subunit.

Its function is as follows. One of the primary rRNA binding proteins, this protein initially binds near the 5'-end of the 23S rRNA. It is important during the early stages of 50S assembly. It makes multiple contacts with different domains of the 23S rRNA in the assembled 50S subunit and ribosome. Forms part of the polypeptide exit tunnel. The polypeptide is Large ribosomal subunit protein uL4 (Methanococcoides burtonii (strain DSM 6242 / NBRC 107633 / OCM 468 / ACE-M)).